Consider the following 261-residue polypeptide: 1-(5-phosphoribosyl)-5-[(5-phosphoribosylamino)methylideneamino] imidazole-4-carboxamide isomerase (261 aa).

Catalysis depends on Asp-8, which acts as the Proton acceptor. Asp-130 acts as the Proton donor in catalysis.

Belongs to the HisA/HisF family.

The protein localises to the cytoplasm. The enzyme catalyses 1-(5-phospho-beta-D-ribosyl)-5-[(5-phospho-beta-D-ribosylamino)methylideneamino]imidazole-4-carboxamide = 5-[(5-phospho-1-deoxy-D-ribulos-1-ylimino)methylamino]-1-(5-phospho-beta-D-ribosyl)imidazole-4-carboxamide. It functions in the pathway amino-acid biosynthesis; L-histidine biosynthesis; L-histidine from 5-phospho-alpha-D-ribose 1-diphosphate: step 4/9. The sequence is that of 1-(5-phosphoribosyl)-5-[(5-phosphoribosylamino)methylideneamino] imidazole-4-carboxamide isomerase from Prosthecochloris aestuarii (strain DSM 271 / SK 413).